The chain runs to 476 residues: Aspartyl/glutamyl-tRNA(Asn/Gln) amidotransferase subunit B (476 aa).

This sequence belongs to the GatB/GatE family. GatB subfamily. As to quaternary structure, heterotrimer of A, B and C subunits.

The enzyme catalyses L-glutamyl-tRNA(Gln) + L-glutamine + ATP + H2O = L-glutaminyl-tRNA(Gln) + L-glutamate + ADP + phosphate + H(+). It carries out the reaction L-aspartyl-tRNA(Asn) + L-glutamine + ATP + H2O = L-asparaginyl-tRNA(Asn) + L-glutamate + ADP + phosphate + 2 H(+). Its function is as follows. Allows the formation of correctly charged Asn-tRNA(Asn) or Gln-tRNA(Gln) through the transamidation of misacylated Asp-tRNA(Asn) or Glu-tRNA(Gln) in organisms which lack either or both of asparaginyl-tRNA or glutaminyl-tRNA synthetases. The reaction takes place in the presence of glutamine and ATP through an activated phospho-Asp-tRNA(Asn) or phospho-Glu-tRNA(Gln). This is Aspartyl/glutamyl-tRNA(Asn/Gln) amidotransferase subunit B from Geobacillus thermodenitrificans (strain NG80-2).